The primary structure comprises 256 residues: Kallikrein 1-related peptidase-like b4 (256 aa).

Positions 1 to 17 (MWFLILFLALSLGGIDA) are cleaved as a signal peptide. An activation peptide homolog region spans residues 18-24 (APPVQSQ). Positions 18–253 (APPVQSQVDC…FSSWIRETMA (236 aa)) constitute a Peptidase S1 domain. Cys45 and Cys61 are disulfide-bonded. Residues Glu77 and His84 each coordinate Zn(2+). 3 disulfides stabilise this stretch: Cys147–Cys214, Cys179–Cys193, and Cys204–Cys229.

It belongs to the peptidase S1 family. Kallikrein subfamily. In terms of assembly, 7S nerve growth factor is composed of two alpha chains, a beta dimer composed of identical chains, and two gamma chains. Requires Zn(2+) as cofactor. In terms of processing, the presence of Gln-24 prevents cleavage of the activation peptide, which remains attached at the amino end of the mature alpha chain.

The sequence is that of Kallikrein 1-related peptidase-like b4 (Klk1b4) from Mus musculus (Mouse).